Consider the following 386-residue polypeptide: S-adenosylmethionine synthase (386 aa).

Residue His17 coordinates ATP. Position 19 (Asp19) interacts with Mg(2+). K(+) is bound at residue Glu45. Residues Glu58 and Gln101 each contribute to the L-methionine site. The tract at residues 101–111 (QSPDISQGVTE) is flexible loop. ATP-binding positions include 168–170 (DAK), Asp242, 248–249 (RK), Ala265, and Lys269. Asp242 contributes to the L-methionine binding site. L-methionine is bound at residue Lys273.

Belongs to the AdoMet synthase family. As to quaternary structure, homotetramer; dimer of dimers. Requires Mg(2+) as cofactor. K(+) serves as cofactor.

Its subcellular location is the cytoplasm. The catalysed reaction is L-methionine + ATP + H2O = S-adenosyl-L-methionine + phosphate + diphosphate. It functions in the pathway amino-acid biosynthesis; S-adenosyl-L-methionine biosynthesis; S-adenosyl-L-methionine from L-methionine: step 1/1. Catalyzes the formation of S-adenosylmethionine (AdoMet) from methionine and ATP. The overall synthetic reaction is composed of two sequential steps, AdoMet formation and the subsequent tripolyphosphate hydrolysis which occurs prior to release of AdoMet from the enzyme. This Leptospira interrogans serogroup Icterohaemorrhagiae serovar copenhageni (strain Fiocruz L1-130) protein is S-adenosylmethionine synthase.